Reading from the N-terminus, the 426-residue chain is Immunoglobulin mu Fc receptor (426 aa).

The N-terminal stretch at 1 to 16 (MNLWLWLLYFLPVSGT) is a signal peptide. The region spanning 24–121 (RLEVELGGSV…GKTQKVTLNV (98 aa)) is the Ig-like domain. Cystine bridges form between Cys-37/Cys-103 and Cys-49/Cys-58. Residue Thr-91 is modified to Phosphothreonine. The disordered stretch occupies residues 178–212 (KTEAPPVHQPSTNTSVSRHPRVYGASSETPTKPSA). Residues 267–287 (FHILIPTFLGFLLLVLLGLVV) traverse the membrane as a helical segment. Disordered stretches follow at residues 306–346 (RRMR…REPD) and 401–426 (DSND…PSRQ). A compositionally biased stretch (pro residues) spans 415 to 426 (PSKPPGPRPSRQ).

In terms of assembly, interacts (via Ig-like domain) with IGHM (via CH4/Cmu4 domain), both secreted and membrane-bound IgM; the interaction is glycan-independent and multivalent theoretically involving up to eight binding sites for the IgM pentamer. Phosphorylated on both Tyr and Ser residues. Post-translationally, O-glycosylated. Sialylated. O-linked glycans regulate trafficking to the plasma membrane.

It localises to the cell membrane. It is found in the early endosome membrane. Its subcellular location is the golgi apparatus. The protein localises to the trans-Golgi network membrane. The protein resides in the lysosome membrane. Its function is as follows. High-affinity Fc receptor for immunoglobulin M (IgM), both secreted and membrane-bound IgM. Primarily regulates IgM transport and homeostasis. In lymphoid cells, enables exocytosis of membrane-bound IgM on the plasma membrane as well as endocytosis of IgM-antigen complexes toward lysosomes for degradation. In mucosal epithelium, mediates retrotranscytosis of antigen-IgM complexes across mucosal M cells toward antigen-presenting cells in mucosal lymphoid tissues. Triggers costimulatory signaling and mediates most of IgM effector functions involved in B cell development and primary immune response to infection. Likely limits tonic IgM BCR signaling to self-antigens for proper negative selection of autoreactive B cells in the bone marrow and for the maintenance of regulatory B cell pool in peripheral lymphoid organs. Mediates antibody responses to T cell-dependent and T cell-independent antigens and promotes induction of an efficient neutralizing IgG response. Engages in cross-talk with antigen-receptor signaling via the non-canonical NF-kappa-B, MAP kinases and calcium signaling pathways. In Rattus norvegicus (Rat), this protein is Immunoglobulin mu Fc receptor.